A 547-amino-acid polypeptide reads, in one-letter code: Smu-2 suppressor of mec-8 and unc-52 protein (547 aa).

5 disordered regions span residues 18-125, 164-202, 288-459, 496-515, and 524-547; these read TSAR…AQDQ, IDKS…AQEL, AEPK…AGPK, NGEG…AKRL, and KIMD…KPKY. Over residues 34-44 the composition is skewed to basic and acidic residues; sequence ADPKTGDDKPA. Positions 45-58 are enriched in basic residues; it reads SFKHKHLKPAKFKK. Residues 66 to 94 adopt a coiled-coil conformation; the sequence is KAKKEKTEADEDEAALKNILKNYRDRAAE. A compositionally biased stretch (basic and acidic residues) spans 87–106; that stretch reads NYRDRAAERRKQGDEKEDPS. The required and sufficient for interaction with smu-1 stretch occupies residues 163–223; sequence EIDKSDDDDD…SLHRVLFKNE (61 aa). Positions 166–178 are enriched in acidic residues; sequence KSDDDDDDDIDTA. 2 stretches are compositionally biased toward low complexity: residues 185–196 and 307–317; these read SSSSSSKPSEAS and APGAAAAAPGA. Positions 330–423 are enriched in basic and acidic residues; that stretch reads VPSRKSRDSR…EREKKRKELE (94 aa). 12 repeat units span residues 336–337, 339–340, 348–349, 350–351, 352–353, 354–355, 356–357, 358–359, 360–361, 362–363, 364–365, and 367–368. Residues 336–368 form a 12 X 2 AA repeats of R-[DS] region; sequence RDSRDAGRRGSRRDRSRDRSRDRDRDRDRDNRD. Residues 371 to 427 are a coiled coil; sequence FEKSANSRREEEQNRREQQRERERAEQERRREREKEREQEKAKEREKKRKELEESSG.

The protein belongs to the RED family. As to quaternary structure, probable component of the spliceosome. Heterotetramer with smu-1. The smu-1 homodimer interacts (via the N-terminal region including the LisH and CTLH domains) with smu-2, giving rise to a heterotetramer. As to expression, ubiquitous.

The protein localises to the nucleus. Functionally, auxiliary spliceosomal protein that regulates selection of alternative splice sites in a small set of target pre-mRNA species. Selectively regulates alternative splicing of unc-52 exon 17. Thus, smu-2 mutants selectively suppress the effects of unc-52 nonsense mutations in exon 17 by promoting the accumulation of unc-52 isoforms that lack exon 17. In contrast, smu-2 mutants do not suppress the effects of an unc-52 mutation that affects the 5' splice site of exon 16. Required for normal accumulation of smu-1. In Caenorhabditis elegans, this protein is Smu-2 suppressor of mec-8 and unc-52 protein.